Consider the following 434-residue polypeptide: D-amino acid dehydrogenase (434 aa).

Residue 3-17 (VVILGSGVVGVTSAW) coordinates FAD.

The protein belongs to the DadA oxidoreductase family. FAD serves as cofactor.

The enzyme catalyses a D-alpha-amino acid + A + H2O = a 2-oxocarboxylate + AH2 + NH4(+). Its pathway is amino-acid degradation; D-alanine degradation; NH(3) and pyruvate from D-alanine: step 1/1. Functionally, oxidative deamination of D-amino acids. This Yersinia pseudotuberculosis serotype O:1b (strain IP 31758) protein is D-amino acid dehydrogenase.